A 304-amino-acid polypeptide reads, in one-letter code: Acetylglutamate kinase (304 aa).

Residues 69–70 (GG), Arg-91, and Asn-202 contribute to the substrate site.

It belongs to the acetylglutamate kinase family. ArgB subfamily.

It localises to the cytoplasm. It catalyses the reaction N-acetyl-L-glutamate + ATP = N-acetyl-L-glutamyl 5-phosphate + ADP. Its pathway is amino-acid biosynthesis; L-arginine biosynthesis; N(2)-acetyl-L-ornithine from L-glutamate: step 2/4. Catalyzes the ATP-dependent phosphorylation of N-acetyl-L-glutamate. This chain is Acetylglutamate kinase, found in Caulobacter sp. (strain K31).